The chain runs to 65 residues: Large ribosomal subunit protein bL35 (65 aa).

The segment covering 1 to 16 (MPKQKTHRASAKRFKR) has biased composition (basic residues). A disordered region spans residues 1 to 20 (MPKQKTHRASAKRFKRTGSG).

The protein belongs to the bacterial ribosomal protein bL35 family.

The sequence is that of Large ribosomal subunit protein bL35 from Streptococcus pyogenes serotype M1.